The sequence spans 437 residues: Purple acid phosphatase 21 (437 aa).

Positions 1–25 (MKKMKIFGFLISFSLFFLSPFVCQA) are cleaved as a signal peptide. The N-linked (GlcNAc...) asparagine glycan is linked to Asn-30. Fe cation-binding residues include Asp-152, Asp-179, and Tyr-182. Asp-179 lines the Zn(2+) pocket. Residues Asn-212 and His-296 each contribute to the Zn(2+) site. Substrate is bound at residue Asn-212. His-306 (proton donor) is an active-site residue. Residue His-333 coordinates Zn(2+). A substrate-binding site is contributed by 333 to 335 (HVH). His-335 serves as a coordination point for Fe cation.

This sequence belongs to the metallophosphoesterase superfamily. Purple acid phosphatase family. As to quaternary structure, homodimer. Fe cation is required as a cofactor. Requires Zn(2+) as cofactor. Expressed flowers and siliques.

Its subcellular location is the secreted. The catalysed reaction is a phosphate monoester + H2O = an alcohol + phosphate. The protein is Purple acid phosphatase 21 (PAP21) of Arabidopsis thaliana (Mouse-ear cress).